A 160-amino-acid chain; its full sequence is Serine-protein kinase RsbW (160 aa).

Belongs to the anti-sigma-factor family.

It catalyses the reaction L-seryl-[protein] + ATP = O-phospho-L-seryl-[protein] + ADP + H(+). The catalysed reaction is L-threonyl-[protein] + ATP = O-phospho-L-threonyl-[protein] + ADP + H(+). Negative regulator of sigma-B activity. Phosphorylates and inactivates its specific antagonist protein, RsbV. Upon phosphorylation of RsbV, RsbW is released and binds to sigma-B, thereby blocking its ability to form an RNA polymerase holoenzyme (E-sigma-B). The polypeptide is Serine-protein kinase RsbW (Bacillus cereus (strain G9842)).